The chain runs to 638 residues: LIM domain kinase 2 (638 aa).

LIM zinc-binding domains lie at 12–63 (CRGC…CHKD) and 72–124 (CHGC…CGKC). In terms of domain architecture, PDZ spans 152 to 239 (LISMPATTEC…TLQLLIEHDP (88 aa)). A Phosphothreonine modification is found at Thr-210. The tract at residues 255 to 304 (PHMQSTGHTLMLSTLDTKENQEGTLRRRSLRRSNSISKSPGPSSPKEPLL) is disordered. Polar residues predominate over residues 257-269 (MQSTGHTLMLSTL). Residues 270–279 (DTKENQEGTL) show a composition bias toward basic and acidic residues. Positions 286-304 (RSNSISKSPGPSSPKEPLL) are enriched in low complexity. A phosphoserine mark is found at Ser-293 and Ser-298. In terms of domain architecture, Protein kinase spans 331–608 (LIHGEVLGKG…DSFEALSLFL (278 aa)). Residues 337-345 (LGKGFFGQA) and Lys-360 contribute to the ATP site. Residue Asp-451 is part of the active site. Position 505 is a phosphothreonine; by ROCK1 and CDC42BP (Thr-505).

The protein belongs to the protein kinase superfamily. TKL Ser/Thr protein kinase family. In terms of assembly, binds ROCK1 and MARF1. Interacts with NISCH. In terms of processing, phosphorylated on serine and/or threonine residues by ROCK1. Specifically expressed in the testes.

It is found in the cytoplasm. The protein resides in the cytoskeleton. The protein localises to the spindle. Its subcellular location is the microtubule organizing center. It localises to the centrosome. It is found in the nucleus. The protein resides in the perinuclear region. It catalyses the reaction L-seryl-[protein] + ATP = O-phospho-L-seryl-[protein] + ADP + H(+). The enzyme catalyses L-threonyl-[protein] + ATP = O-phospho-L-threonyl-[protein] + ADP + H(+). Functionally, serine/threonine-protein kinase that plays an essential role in the regulation of actin filament dynamics. Acts downstream of several Rho family GTPase signal transduction pathways. Involved in astral microtubule organization and mitotic spindle orientation during early stages of mitosis by mediating phosphorylation of TPPP. Displays serine/threonine-specific phosphorylation of myelin basic protein and histone (MBP) in vitro. Suppresses ciliogenesis via multiple pathways; phosphorylation of CFL1, suppression of directional trafficking of ciliary vesicles to the ciliary base, and by facilitating YAP1 nuclear localization where it acts as a transcriptional corepressor of the TEAD4 target genes AURKA and PLK1. This Mus musculus (Mouse) protein is LIM domain kinase 2 (Limk2).